Reading from the N-terminus, the 145-residue chain is Angiogenin (145 aa).

Residues 1 to 24 form the signal peptide; sequence MAISPGPLFLIFVLGLVVIPPTLA. Glutamine 25 carries the post-translational modification Pyrrolidone carboxylic acid. Histidine 37 functions as the Proton acceptor in the catalytic mechanism. TRNA contacts are provided by arginine 45 and aspartate 46. 3 disulfides stabilise this stretch: cysteine 50-cysteine 104, cysteine 63-cysteine 115, and cysteine 81-cysteine 130. Residues 55–59 carry the Nucleolar localization signal motif; sequence KRRSL. Positions 104 and 126 each coordinate tRNA. Histidine 137 functions as the Proton donor in the catalytic mechanism.

Belongs to the pancreatic ribonuclease family. As to quaternary structure, homodimer. Interacts with RNH1; inhibiting ANG ribonuclease activity. Interacts with PCNA.

The protein localises to the secreted. It is found in the nucleus. Its subcellular location is the nucleolus. It localises to the cytoplasm. The protein resides in the stress granule. Has weak tRNA ribonuclease activity by itself due to partial autoinhibition by its C-terminus (residues 139-145), which folds into a short alpha-helix that partially occludes the substrate-binding site. In absence of stress, the ribonuclease activity is inhibited by RNH1 in the cytoplasm. In response to stress, dissociates from RNH1 in the cytoplasm and associates with cytoplasmic ribosomes with vacant A-sites: ribosomes directly activate the tRNA ribonuclease activity of ANG by refolding the C-terminal alpha-helix. In response to stress, the angiogenic activity of ANG is inhibited by RNH1 in the nucleus. Functionally, secreted ribonuclease that can either promote or restrict cell proliferation of target cells, depending on the context. Endocytosed in target cells via its receptor PLXNB2 and translocates to the cytoplasm or nucleus. Under stress conditions, localizes to the cytoplasm and promotes the assembly of stress granules (SGs): specifically cleaves a subset of tRNAs within anticodon loops to produce tRNA-derived stress-induced fragments (tiRNAs), resulting in translation repression and inhibition of cell proliferation. tiRNas also prevent formation of apoptosome, thereby promoting cell survival. Preferentially cleaves RNAs between a pyrimidine and an adenosine residue, suggesting that it cleaves the anticodon loop of tRNA(Ala) (32-UUAGCAU-38) after positions 33 and 36. Cleaves a subset of tRNAs, including tRNA(Ala), tRNA(Glu), tRNA(Gly), tRNA(Lys), tRNA(Val), tRNA(His), tRNA(Asp) and tRNA(Sec). Under growth conditions and in differentiated cells, translocates to the nucleus and stimulates ribosomal RNA (rRNA) transcription, including that containing the initiation site sequences of 45S rRNA, thereby promoting cell growth and proliferation. Angiogenin induces vascularization of normal and malignant tissues via its ability to promote rRNA transcription. Involved in hematopoietic stem and progenitor cell (HSPC) growth and survival by promoting rRNA transcription in growth conditions and inhibiting translation in response to stress, respectively. Mediates the crosstalk between myeloid and intestinal epithelial cells to protect the intestinal epithelial barrier integrity: secreted by myeloid cells and promotes intestinal epithelial cells proliferation and survival. Also mediates osteoclast-endothelial cell crosstalk in growing bone: produced by osteoclasts and protects the neighboring vascular cells against senescence by promoting rRNA transcription. This chain is Angiogenin, found in Mus musculus (Mouse).